The primary structure comprises 530 residues: Estrogen receptor beta (530 aa).

The tract at residues 1–148 is modulating; sequence MEIKNSPSSL…SPSAKRDAHF (148 aa). Residue Ser61 is modified to Phosphoserine; alternate. A glycan (O-linked (GlcNAc) serine; alternate) is linked at Ser61. Residues Ser87 and Ser105 each carry the phosphoserine; by MAPK modification. 2 consecutive NR C4-type zinc fingers follow at residues 149–169 and 185–209; these read CAVC…CEGC and CPAT…LRKC. Residues 149–214 constitute a DNA-binding region (nuclear receptor); it reads CAVCSDYASG…RLRKCYEVGM (66 aa). The region spanning 264-498 is the NR LBD domain; the sequence is SPEQLVLTLL…DLLLEMLNAH (235 aa). A compositionally biased stretch (polar residues) spans 506–515; sequence SISGSECCST. Residues 506 to 530 form a disordered region; sequence SISGSECCSTEDSKSKEGSQNLQSQ.

This sequence belongs to the nuclear hormone receptor family. NR3 subfamily. As to quaternary structure, binds DNA as a homodimer. Can form a heterodimer with ESR1. Interacts with NCOA1, NCOA3, NCOA5 and NCOA6 coactivators, leading to a strong increase of transcription of target genes. Interacts with UBE1C and AKAP13. Interacts with DNTTIP2. Interacts with CCDC62 in the presence of estradiol/E2; this interaction seems to enhance the transcription of target genes. Interacts with DNAAF4. Interacts with PRMT2. Interacts with CCAR2 (via N-terminus) in a ligand-independent manner. Interacts with RBM39, in the presence of estradiol (E2). Interacts with STUB1/CHIP. Phosphorylation at Ser-87 and Ser-105 recruits NCOA1. Expressed in prostate, ovary, Leydig cells and in epithelium of the efferent ductules and of the initial segment of the epididymis.

The protein localises to the nucleus. Functionally, nuclear hormone receptor. Binds estrogens with an affinity similar to that of ESR1/ER-alpha, and activates expression of reporter genes containing estrogen response elements (ERE) in an estrogen-dependent manner. In Mus musculus (Mouse), this protein is Estrogen receptor beta (Esr2).